Consider the following 307-residue polypeptide: 2-dehydropantoate 2-reductase (307 aa).

NADP(+)-binding positions include glycine 7–glycine 12, asparagine 102, and alanine 128. Asparagine 102 contacts substrate. Lysine 184 acts as the Proton donor in catalysis. Asparagine 188, asparagine 192, and serine 255 together coordinate substrate. An NADP(+)-binding site is contributed by glutamate 268.

It belongs to the ketopantoate reductase family.

It is found in the cytoplasm. The catalysed reaction is (R)-pantoate + NADP(+) = 2-dehydropantoate + NADPH + H(+). The protein operates within cofactor biosynthesis; (R)-pantothenate biosynthesis; (R)-pantoate from 3-methyl-2-oxobutanoate: step 2/2. Catalyzes the NADPH-dependent reduction of ketopantoate into pantoic acid. The protein is 2-dehydropantoate 2-reductase (apbA) of Streptococcus pyogenes serotype M6 (strain ATCC BAA-946 / MGAS10394).